The following is a 404-amino-acid chain: F-box only protein 12 (404 aa).

An F-box domain is found at 1–44 (MKNSIPIDLIYEILSRLPAKSVARCRCVSKRWRSILRHQVFTEL). A helical transmembrane segment spans residues 383 to 403 (LAILFCLFFLLFNYLIRLCWV).

It is found in the membrane. The sequence is that of F-box only protein 12 (FBX12) from Arabidopsis thaliana (Mouse-ear cress).